The sequence spans 291 residues: N-acetylmannosamine kinase (291 aa).

Residues 5-12 (AIDIGGTK) and 132-139 (GVGGGVVC) contribute to the ATP site. Zn(2+) is bound by residues His-156, Cys-166, Cys-168, and Cys-173.

Belongs to the ROK (NagC/XylR) family. NanK subfamily. Homodimer.

The catalysed reaction is an N-acyl-D-mannosamine + ATP = an N-acyl-D-mannosamine 6-phosphate + ADP + H(+). It participates in amino-sugar metabolism; N-acetylneuraminate degradation; D-fructose 6-phosphate from N-acetylneuraminate: step 2/5. Functionally, catalyzes the phosphorylation of N-acetylmannosamine (ManNAc) to ManNAc-6-P. This is N-acetylmannosamine kinase from Salmonella paratyphi A (strain ATCC 9150 / SARB42).